Consider the following 1528-residue polypeptide: Mitogen-activated protein kinase kinae kinase MCK1 (1528 aa).

The span at 1–11 (MYPGSSQSRPY) shows a compositional bias: low complexity. 10 disordered regions span residues 1–84 (MYPG…PAPR), 109–208 (ATAP…VPGI), 303–418 (VHAR…NNVR), 449–481 (INGRGARQSPSDLGDNSAGTDSPVSARDTKLPF), 607–652 (VKPP…EARL), 695–731 (GKPVDFDTPRHSPYEDKNTDRMFPTRNAPAPPVAPSA), 746–786 (VQGS…SQPM), 811–929 (SANN…SDDG), 943–1012 (KKAK…EDGK), and 1086–1191 (ATPL…ALLR). Positions 12–21 (QVPPPPPMSP) are enriched in pro residues. A compositionally biased stretch (low complexity) spans 22 to 31 (PLSQMHQQMS). Pro residues predominate over residues 53 to 64 (APPPPPPGPPPA). The span at 157-173 (SSQTWQTTSSSSTNTAS) shows a compositional bias: low complexity. 3 stretches are compositionally biased toward polar residues: residues 174–183 (VNDNVQSNAP), 191–205 (NNSASITGTQSSSNV), and 318–327 (HGRQGSINSR). Over residues 328–337 (GNDKGTHDGS) the composition is skewed to basic and acidic residues. Polar residues predominate over residues 338–363 (DSPNTPSSQSRSTTIPTFPDGSSFSN). Low complexity predominate over residues 396-408 (SSTPKSSTLSVSP). The segment covering 409–418 (HSSRFGNNVR) has biased composition (polar residues). Composition is skewed to polar residues over residues 613 to 622 (SQQSTWSAGD) and 630 to 641 (GTSSSMSRQQNT). Basic and acidic residues-rich tracts occupy residues 642 to 652 (LKDDQSEEARL) and 698 to 714 (VDFDTPRHSPYEDKNTD). Residues 846-860 (RSQTAGDLSPISQMP) are compositionally biased toward polar residues. The segment covering 917 to 928 (QSDDDSGDDSDD) has biased composition (acidic residues). Over residues 977-986 (VSFNSPQSAR) the composition is skewed to polar residues. The segment covering 1001–1012 (PKSDMWDSEDGK) has biased composition (basic and acidic residues). Over residues 1086–1111 (ATPLNSLPPSRVQSMYNESDTLGSDE) the composition is skewed to polar residues. The span at 1142-1152 (SIREKARGAHE) shows a compositional bias: basic and acidic residues. Residues 1158 to 1188 (TQTSMAAPQGLSRSGGTPATETQPTQNNSSA) show a composition bias toward polar residues. One can recognise a Protein kinase domain in the interval 1238–1507 (WFKGQLIGKG…NKLLSQHPFC (270 aa)). ATP is bound by residues 1244-1252 (IGKGTYGRV) and lysine 1267.

It belongs to the protein kinase superfamily. STE Ser/Thr protein kinase family. MAP kinase kinase kinase subfamily. Interacts with the adapter protein MST50 and MIP11.

The enzyme catalyses L-seryl-[protein] + ATP = O-phospho-L-seryl-[protein] + ADP + H(+). It carries out the reaction L-threonyl-[protein] + ATP = O-phospho-L-threonyl-[protein] + ADP + H(+). Mitogen-activated protein kinase kinase kinase; part of the MCK1-MKK2-MPS1 MAP kinase (MAPK) signal transduction cascade that is essential for appressorium formation, penetration and invasive growth. Beside its role in pathogenesis, the MPS1 cascade is active in conidiation and cellular stress responses. Targets downstream of the the MPS1-MAPK pathway include transcription factors MIG1 and SWI6, as well as GSK1 and MPG1. This chain is Mitogen-activated protein kinase kinae kinase MCK1, found in Pyricularia oryzae (strain 70-15 / ATCC MYA-4617 / FGSC 8958) (Rice blast fungus).